A 206-amino-acid polypeptide reads, in one-letter code: Flavin prenyltransferase UbiX (206 aa).

FMN is bound by residues 11-13 (GAS), Ser-37, 103-106 (SMST), and Arg-138. The dimethylallyl phosphate site is built by Tyr-168 and Arg-184.

It belongs to the UbiX/PAD1 family.

It carries out the reaction dimethylallyl phosphate + FMNH2 = prenylated FMNH2 + phosphate. Its function is as follows. Flavin prenyltransferase that catalyzes the synthesis of the prenylated FMN cofactor (prenyl-FMN) for 4-hydroxy-3-polyprenylbenzoic acid decarboxylase UbiD. The prenyltransferase is metal-independent and links a dimethylallyl moiety from dimethylallyl monophosphate (DMAP) to the flavin N5 and C6 atoms of FMN. In Synechocystis sp. (strain ATCC 27184 / PCC 6803 / Kazusa), this protein is Flavin prenyltransferase UbiX.